The sequence spans 318 residues: uncharacterized protein (318 aa).

The next 4 helical transmembrane spans lie at 112–132, 147–167, 209–229, and 237–257; these read VIGV…PVFL, IAIE…FLSM, CGSS…LLVP, and VIDR…VLQL.

It is found in the cell membrane. This is an uncharacterized protein from Bacillus subtilis (strain 168).